A 326-amino-acid chain; its full sequence is tRNA uridine(34) hydroxylase (326 aa).

The region spanning 123 to 217 is the Rhodanese domain; it reads SDPDVLLVDT…YLEEVPEENS (95 aa). Residue C177 is the Cysteine persulfide intermediate of the active site. Residues 276–320 show a composition bias toward basic and acidic residues; the sequence is EEQKSRFREREKQVQLANERGETHVGGDAAKLIEQRKQEKKEKKQ. Positions 276–326 are disordered; the sequence is EEQKSRFREREKQVQLANERGETHVGGDAAKLIEQRKQEKKEKKQQQRSSK.

Belongs to the TrhO family.

The catalysed reaction is uridine(34) in tRNA + AH2 + O2 = 5-hydroxyuridine(34) in tRNA + A + H2O. In terms of biological role, catalyzes oxygen-dependent 5-hydroxyuridine (ho5U) modification at position 34 in tRNAs. The polypeptide is tRNA uridine(34) hydroxylase (Aliivibrio salmonicida (strain LFI1238) (Vibrio salmonicida (strain LFI1238))).